Here is a 792-residue protein sequence, read N- to C-terminus: LPS-assembly protein LptD (792 aa).

The N-terminal stretch at 1–22 (MYRVLRLLPLPLSVAISLSALA) is a signal peptide.

It belongs to the LptD family. Component of the lipopolysaccharide transport and assembly complex. Interacts with LptE and LptA.

The protein resides in the cell outer membrane. Functionally, together with LptE, is involved in the assembly of lipopolysaccharide (LPS) at the surface of the outer membrane. This chain is LPS-assembly protein LptD, found in Xylella fastidiosa (strain Temecula1 / ATCC 700964).